The chain runs to 410 residues: Trifunctional NAD biosynthesis/regulator protein NadR (410 aa).

One can recognise an HTH cro/C1-type domain in the interval 7-62 (LKTAIKQQGCTLQQVADASGMTKGYLSQLLNAKIKSPSAQKLEALHRFLGLEFPRR). The segment at residues 18–37 (LQQVADASGMTKGYLSQLLN) is a DNA-binding region (H-T-H motif). Residues 63–229 (QKNIGVVFGK…EYIPTEVKPF (167 aa)) form a nicotinamide mononucleotide adenylyltransferase region. Residues 70–73 (FGKF), His77, Arg104, 144–157 (EEGMEPYPHGWDVW), 177–179 (TSE), 204–206 (MNI), 259–261 (SAW), and 294–297 (YIDF) contribute to the NAD(+) site. The tract at residues 230–410 (FVRTVAILGG…LVKEMMGEQG (181 aa)) is ribosylnicotinamide kinase.

The protein in the central section; belongs to the bacterial NMN adenylyltransferase family. This sequence in the C-terminal section; belongs to the bacterial RNK family. In terms of assembly, homotetramer.

The protein resides in the cell membrane. It localises to the cytoplasm. The catalysed reaction is beta-nicotinamide D-ribonucleotide + ATP + H(+) = diphosphate + NAD(+). It catalyses the reaction beta-nicotinamide D-riboside + ATP = beta-nicotinamide D-ribonucleotide + ADP + H(+). It functions in the pathway cofactor biosynthesis; NAD(+) biosynthesis [regulation]. The protein operates within cofactor biosynthesis; NAD(+) biosynthesis; NAD(+) from nicotinamide D-ribonucleotide: step 1/1. Feed-back regulated by NAD. A high level of NAD causes NadR to lose enzymatic activity and repress several NAD synthetic genes; conversely, a low NAD level activates the assimilatory enzymatic activities and leads to derepression of biosynthetic genes. Functionally, this enzyme has three activities: DNA binding, nicotinamide mononucleotide (NMN) adenylyltransferase and ribosylnicotinamide (RN) kinase. The DNA-binding domain binds to the nadB operator sequence in an NAD- and ATP-dependent manner. As NAD levels increase within the cell, the affinity of NadR for the nadB operator regions of nadA, nadB, and pncB increases, repressing the transcription of these genes. The RN kinase activity catalyzes the phosphorylation of RN to form nicotinamide ribonucleotide. The NMN adenylyltransferase activity catalyzes the transfer of the AMP moiety of ATP to nicotinamide ribonucleotide to form NAD(+). The NMN adenylyltransferase domain also functions as the NAD and ATP sensor. The sequence is that of Trifunctional NAD biosynthesis/regulator protein NadR (nadR) from Salmonella typhimurium (strain LT2 / SGSC1412 / ATCC 700720).